The primary structure comprises 342 residues: S-adenosylmethionine:tRNA ribosyltransferase-isomerase (342 aa).

It belongs to the QueA family. In terms of assembly, monomer.

Its subcellular location is the cytoplasm. The enzyme catalyses 7-aminomethyl-7-carbaguanosine(34) in tRNA + S-adenosyl-L-methionine = epoxyqueuosine(34) in tRNA + adenine + L-methionine + 2 H(+). It participates in tRNA modification; tRNA-queuosine biosynthesis. In terms of biological role, transfers and isomerizes the ribose moiety from AdoMet to the 7-aminomethyl group of 7-deazaguanine (preQ1-tRNA) to give epoxyqueuosine (oQ-tRNA). This is S-adenosylmethionine:tRNA ribosyltransferase-isomerase from Streptococcus pneumoniae serotype 4 (strain ATCC BAA-334 / TIGR4).